The primary structure comprises 624 residues: E3 ubiquitin-protein ligase RLIM (624 aa).

M1 bears the N-acetylmethionine mark. A compositionally biased stretch (basic and acidic residues) spans 1–11; it reads MENSDSNDKGS. 5 disordered regions span residues 1 to 25, 72 to 251, 257 to 276, 291 to 363, and 424 to 522; these read MENSDSNDKGSGDQSAAQRRSQMDR, KEGP…SQTF, NETEGSSRTRHHVTLRQQIS, TRNA…RGGF, and SDSE…TFDE. Over residues 104–132 the composition is skewed to polar residues; it reads SVRQTGNTTRSGQRGNQSWRAVSRTNPNS. The span at 142 to 153 shows a compositional bias: low complexity; that stretch reads NVNRNNGSQNSE. S164 is subject to Phosphoserine. Positions 165 to 188 are enriched in polar residues; it reads GENVENNSQRQVENPRSESTSARP. 4 positions are modified to phosphoserine: S195, S228, S230, and S276. The segment covering 214 to 229 has biased composition (basic and acidic residues); that stretch reads RSPDHRRTRARAERSR. Positions 291-315 are enriched in polar residues; it reads TRNASQGAGSSDTAASGESTGSGQR. Basic and acidic residues predominate over residues 329–339; that stretch reads RPGEYRQRDSI. The span at 340–356 shows a compositional bias: polar residues; that stretch reads ASRTRSRSQTPNNTVTY. The span at 445–454 shows a compositional bias: gly residues; it reads GRGGSGGGSS. The segment covering 455-507 has biased composition (low complexity); sequence SGSSSSSSSSSSSSSSSSSSSSPSSSSGGESSETSSDLFEGSNEGSSSSGSSG. The RING-type zinc-finger motif lies at 570–611; sequence CSVCITEYTEGNKLRKLPCSHEYHVHCIDRWLSENSTCPICR. The PDZ-binding signature appears at 621–624; that stretch reads ESVV.

The protein belongs to the RNF12 family. In terms of assembly, interacts with LIM/homeobox factors such as LHX3. Interacts with LDB1, LDB2 and SIN3A. Interacts with LIMK1. Interacts (via N-terminus) with TERF1. Interacts (via C-terminus) with ESR1. In terms of tissue distribution, expressed in many tissues.

It is found in the nucleus. It carries out the reaction S-ubiquitinyl-[E2 ubiquitin-conjugating enzyme]-L-cysteine + [acceptor protein]-L-lysine = [E2 ubiquitin-conjugating enzyme]-L-cysteine + N(6)-ubiquitinyl-[acceptor protein]-L-lysine.. It functions in the pathway protein modification; protein ubiquitination. Its function is as follows. E3 ubiquitin-protein ligase. Acts as a negative coregulator for LIM homeodomain transcription factors by mediating the ubiquitination and subsequent degradation of LIM cofactors LDB1 and LDB2 and by mediating the recruitment the SIN3a/histone deacetylase corepressor complex. Ubiquitination and degradation of LIM cofactors LDB1 and LDB2 allows DNA-bound LIM homeodomain transcription factors to interact with other protein partners such as RLIM. Plays a role in telomere length-mediated growth suppression by mediating the ubiquitination and degradation of TERF1. By targeting ZFP42 for degradation, acts as an activator of random inactivation of X chromosome in the embryo, a stochastic process in which one X chromosome is inactivated to minimize sex-related dosage differences of X-encoded genes in somatic cells of female placental mammals. In Homo sapiens (Human), this protein is E3 ubiquitin-protein ligase RLIM (RLIM).